We begin with the raw amino-acid sequence, 495 residues long: Homeobox protein ceh-21 (495 aa).

Polar residues predominate over residues 1–14 (MSQQFQASSGTGSA). 2 disordered regions span residues 1–24 (MSQQFQASSGTGSASLREFKTEHE) and 89–267 (TAES…PGGE). Residues 106-120 (LEEKSDKSSDGDGTS) show a composition bias toward basic and acidic residues. Acidic residues predominate over residues 132 to 145 (NETEEDHEEKEDEA). Over residues 149-162 (SRRESTRLKRKLLE) the composition is skewed to basic and acidic residues. Composition is skewed to polar residues over residues 163 to 179 (SQKTVQTTGNSSRASSK) and 199 to 217 (TPEQSKAATKRQSSTTVRA). The segment covering 218 to 233 (SSTCGSSVSSTSTVSS) has biased composition (low complexity). The segment covering 242 to 254 (RATETPKLEELAP) has biased composition (basic and acidic residues). Positions 284–370 (NAQIGDDEEL…VRRALCFLPK (87 aa)) form a DNA-binding region, CUT. The segment at residues 389–449 (KTVKVIRLTF…MNSRRRLRID (61 aa)) is a DNA-binding region (homeobox). A disordered region spans residues 450–473 (QQISRSSRSTGNGADTEDELDEED). Over residues 464–473 (DTEDELDEED) the composition is skewed to acidic residues.

This sequence belongs to the CUT homeobox family.

It localises to the nucleus. In terms of biological role, probable DNA-binding regulatory protein involved in cell-fate specification. The sequence is that of Homeobox protein ceh-21 (ceh-21) from Caenorhabditis elegans.